The following is a 113-amino-acid chain: Coat protein TP1 (113 aa).

It is found in the virion. The sequence is that of Coat protein TP1 from Thermoproteus tenax virus 1 (strain KRA1) (TTV1).